Reading from the N-terminus, the 151-residue chain is Extracellular globin-4 (151 aa).

A Globin domain is found at 6 to 151 (CCSYEDRREI…LVARIAKDLP (146 aa)). A disulfide bridge links Cys-7 with Cys-138. Residue His-101 coordinates heme b.

The protein belongs to the globin family. In terms of assembly, the extracellular hemoglobin of the earthworm consists of 12 subunits that have a hexagonal bilayer structure with a molecular weight near 3.8 million. Each one-twelfth subunit is composed primarily of disulfide linked trimers (chains A, B, and C) and monomers (chain D).

The protein resides in the secreted. The chain is Extracellular globin-4 from Lumbricus terrestris (Common earthworm).